Here is a 275-residue protein sequence, read N- to C-terminus: tRNA pseudouridine synthase A (275 aa).

Residue aspartate 72 is the Nucleophile of the active site. Tyrosine 133 contributes to the substrate binding site.

It belongs to the tRNA pseudouridine synthase TruA family. As to quaternary structure, homodimer.

It catalyses the reaction uridine(38/39/40) in tRNA = pseudouridine(38/39/40) in tRNA. Functionally, formation of pseudouridine at positions 38, 39 and 40 in the anticodon stem and loop of transfer RNAs. This is tRNA pseudouridine synthase A from Gluconobacter oxydans (strain 621H) (Gluconobacter suboxydans).